A 217-amino-acid chain; its full sequence is Probable GTP-binding protein EngB (217 aa).

The region spanning 24–207 (SQPEICFAGR…HALIESWLIP (184 aa)) is the EngB-type G domain. GTP contacts are provided by residues 32 to 39 (GRSNAGKS), 59 to 63 (GRTQH), 81 to 84 (DLPG), 148 to 151 (TKCD), and 185 to 188 (LFSA). Mg(2+) is bound by residues S39 and T61.

The protein belongs to the TRAFAC class TrmE-Era-EngA-EngB-Septin-like GTPase superfamily. EngB GTPase family. It depends on Mg(2+) as a cofactor.

Necessary for normal cell division and for the maintenance of normal septation. This is Probable GTP-binding protein EngB from Paraburkholderia xenovorans (strain LB400).